Reading from the N-terminus, the 389-residue chain is uncharacterized protein (389 aa).

4 helical membrane-spanning segments follow: residues Leu-31–Ile-51, Ile-96–Val-116, Ala-123–Pro-143, and Met-152–Ser-172.

This sequence to M.tuberculosis Rv2571c.

The protein localises to the cell membrane. This is an uncharacterized protein from Corynebacterium glutamicum (strain ATCC 13032 / DSM 20300 / JCM 1318 / BCRC 11384 / CCUG 27702 / LMG 3730 / NBRC 12168 / NCIMB 10025 / NRRL B-2784 / 534).